The sequence spans 202 residues: Small ribosomal subunit protein uS4c (202 aa).

One can recognise an S4 RNA-binding domain in the interval M90–N154.

The protein belongs to the universal ribosomal protein uS4 family. As to quaternary structure, part of the 30S ribosomal subunit. Contacts protein S5. The interaction surface between S4 and S5 is involved in control of translational fidelity.

The protein resides in the plastid. Its subcellular location is the chloroplast. Functionally, one of the primary rRNA binding proteins, it binds directly to 16S rRNA where it nucleates assembly of the body of the 30S subunit. In terms of biological role, with S5 and S12 plays an important role in translational accuracy. This is Small ribosomal subunit protein uS4c (rps4) from Marchantia polymorpha (Common liverwort).